The chain runs to 171 residues: Large ribosomal subunit protein uL10 (171 aa).

Belongs to the universal ribosomal protein uL10 family. Part of the ribosomal stalk of the 50S ribosomal subunit. The N-terminus interacts with L11 and the large rRNA to form the base of the stalk. The C-terminus forms an elongated spine to which L12 dimers bind in a sequential fashion forming a multimeric L10(L12)X complex.

In terms of biological role, forms part of the ribosomal stalk, playing a central role in the interaction of the ribosome with GTP-bound translation factors. The polypeptide is Large ribosomal subunit protein uL10 (Sphingopyxis alaskensis (strain DSM 13593 / LMG 18877 / RB2256) (Sphingomonas alaskensis)).